Consider the following 384-residue polypeptide: S-adenosylmethionine synthase (384 aa).

Residue His-15 coordinates ATP. Residue Asp-17 coordinates Mg(2+). Residue Glu-43 coordinates K(+). L-methionine is bound by residues Glu-56 and Gln-99. The flexible loop stretch occupies residues 99–109 (QSPDINQGVDR). ATP contacts are provided by residues 164 to 166 (DAK), 231 to 232 (RF), Asp-240, 246 to 247 (RK), Ala-263, and Lys-267. Residue Asp-240 participates in L-methionine binding. An L-methionine-binding site is contributed by Lys-271.

The protein belongs to the AdoMet synthase family. Homotetramer; dimer of dimers. Mg(2+) serves as cofactor. K(+) is required as a cofactor.

Its subcellular location is the cytoplasm. The enzyme catalyses L-methionine + ATP + H2O = S-adenosyl-L-methionine + phosphate + diphosphate. It participates in amino-acid biosynthesis; S-adenosyl-L-methionine biosynthesis; S-adenosyl-L-methionine from L-methionine: step 1/1. Catalyzes the formation of S-adenosylmethionine (AdoMet) from methionine and ATP. The overall synthetic reaction is composed of two sequential steps, AdoMet formation and the subsequent tripolyphosphate hydrolysis which occurs prior to release of AdoMet from the enzyme. The sequence is that of S-adenosylmethionine synthase from Shewanella halifaxensis (strain HAW-EB4).